The primary structure comprises 425 residues: MSKIVVAGGTPLCGDVRISGAKNAVLPILSATLLADAPVEISNVPYLHDVITMINLLRELGAGVTMNEGIEAKGRSITVDPRWVRQHMVPYDLVKTMRASVLLLGPLLACYGAAEVALPGGCAIGSRPVDQHIRGLQSLGAEITVENGYIKASVSQGRLKGGRFVFDVVSVTGTENLLMAAAVAQGTSVIENAAMEPEVVDLAECLIALGARIEGAGTPRIVVEGVERLKGGQYAVLPDRIETGTFLVATAMTGGRISMQQVRPQTLDAVLGKLTEAGACIEIGEDSIRLDMQGRRPCSVNLTTAPYPGFPTDMQAQFMALNCVAEGVGVIKETIFENRFMHVDELLRLGAKIQIEGHTAIVQGVERLSGAPVMATDLRASASLILAGLVAEGETIIDRIYHLDRGYENIEGKLGALGASIRRMT.

Residue 22–23 coordinates phosphoenolpyruvate; sequence KN. Arg98 is a UDP-N-acetyl-alpha-D-glucosamine binding site. Catalysis depends on Cys122, which acts as the Proton donor. Residue Cys122 is modified to 2-(S-cysteinyl)pyruvic acid O-phosphothioketal. Residues 127–131, Asp313, and Ile335 each bind UDP-N-acetyl-alpha-D-glucosamine; that span reads RPVDQ.

The protein belongs to the EPSP synthase family. MurA subfamily.

It localises to the cytoplasm. It catalyses the reaction phosphoenolpyruvate + UDP-N-acetyl-alpha-D-glucosamine = UDP-N-acetyl-3-O-(1-carboxyvinyl)-alpha-D-glucosamine + phosphate. It functions in the pathway cell wall biogenesis; peptidoglycan biosynthesis. In terms of biological role, cell wall formation. Adds enolpyruvyl to UDP-N-acetylglucosamine. The chain is UDP-N-acetylglucosamine 1-carboxyvinyltransferase from Xylella fastidiosa (strain 9a5c).